The sequence spans 737 residues: Phosphoribosylformylglycinamidine synthase subunit PurL (737 aa).

H50 is a catalytic residue. Residues Y53 and K92 each contribute to the ATP site. A Mg(2+)-binding site is contributed by E94. Substrate contacts are provided by residues 95–98 (SHNH) and R117. H96 acts as the Proton acceptor in catalysis. D118 is a binding site for Mg(2+). Residue Q241 participates in substrate binding. Mg(2+) is bound at residue D269. 313-315 (ESQ) contacts substrate. The ATP site is built by D494 and G531. Residue N532 participates in Mg(2+) binding. S534 contacts substrate.

This sequence belongs to the FGAMS family. In terms of assembly, monomer. Part of the FGAM synthase complex composed of 1 PurL, 1 PurQ and 2 PurS subunits.

The protein localises to the cytoplasm. The enzyme catalyses N(2)-formyl-N(1)-(5-phospho-beta-D-ribosyl)glycinamide + L-glutamine + ATP + H2O = 2-formamido-N(1)-(5-O-phospho-beta-D-ribosyl)acetamidine + L-glutamate + ADP + phosphate + H(+). It participates in purine metabolism; IMP biosynthesis via de novo pathway; 5-amino-1-(5-phospho-D-ribosyl)imidazole from N(2)-formyl-N(1)-(5-phospho-D-ribosyl)glycinamide: step 1/2. Its function is as follows. Part of the phosphoribosylformylglycinamidine synthase complex involved in the purines biosynthetic pathway. Catalyzes the ATP-dependent conversion of formylglycinamide ribonucleotide (FGAR) and glutamine to yield formylglycinamidine ribonucleotide (FGAM) and glutamate. The FGAM synthase complex is composed of three subunits. PurQ produces an ammonia molecule by converting glutamine to glutamate. PurL transfers the ammonia molecule to FGAR to form FGAM in an ATP-dependent manner. PurS interacts with PurQ and PurL and is thought to assist in the transfer of the ammonia molecule from PurQ to PurL. This chain is Phosphoribosylformylglycinamidine synthase subunit PurL, found in Nitrobacter winogradskyi (strain ATCC 25391 / DSM 10237 / CIP 104748 / NCIMB 11846 / Nb-255).